The chain runs to 38 residues: MPSQEDAVAWSTGCCGLVIVWFVLGRLAGSVAGMFNDR.

The polypeptide is Phi-Lf prophage-derived putative minor coat protein (gIX-1) (Xanthomonas campestris pv. campestris (strain ATCC 33913 / DSM 3586 / NCPPB 528 / LMG 568 / P 25)).